The chain runs to 185 residues: Elongation factor P (185 aa).

Belongs to the elongation factor P family.

Its subcellular location is the cytoplasm. It functions in the pathway protein biosynthesis; polypeptide chain elongation. Involved in peptide bond synthesis. Stimulates efficient translation and peptide-bond synthesis on native or reconstituted 70S ribosomes in vitro. Probably functions indirectly by altering the affinity of the ribosome for aminoacyl-tRNA, thus increasing their reactivity as acceptors for peptidyl transferase. This Pelotomaculum thermopropionicum (strain DSM 13744 / JCM 10971 / SI) protein is Elongation factor P.